Consider the following 389-residue polypeptide: Flap endonuclease 1 (389 aa).

An N-domain region spans residues 1 to 110 (MGIKGLMKLL…GELAKRSDRR (110 aa)). D35 is a binding site for Mg(2+). DNA contacts are provided by R48 and R76. Residue D92 coordinates Mg(2+). Positions 103 to 124 (LAKRSDRRQEAQKALEEATEKG) are disordered. Residues 128–259 (DIDRFNKRLV…KKAYAGIKEH (132 aa)) are I-domain. Positions 164, 166, 185, and 187 each coordinate Mg(2+). A DNA-binding site is contributed by E164. Positions 237 and 239 each coordinate DNA. Residue D239 participates in Mg(2+) binding. Residues 350–358 (SQKRLDSFF) form an interaction with PCNA region. The disordered stretch occupies residues 362-389 (PSANGAKKRKAPAAKGGKKAATAKKGKK). Basic residues predominate over residues 367-389 (AKKRKAPAAKGGKKAATAKKGKK).

Belongs to the XPG/RAD2 endonuclease family. FEN1 subfamily. In terms of assembly, interacts with PCNA. Three molecules of FEN1 bind to one PCNA trimer with each molecule binding to one PCNA monomer. PCNA stimulates the nuclease activity without altering cleavage specificity. Mg(2+) serves as cofactor. Post-translationally, phosphorylated. Phosphorylation upon DNA damage induces relocalization to the nuclear plasma.

The protein localises to the nucleus. The protein resides in the nucleolus. Its subcellular location is the nucleoplasm. It is found in the mitochondrion. In terms of biological role, structure-specific nuclease with 5'-flap endonuclease and 5'-3' exonuclease activities involved in DNA replication and repair. During DNA replication, cleaves the 5'-overhanging flap structure that is generated by displacement synthesis when DNA polymerase encounters the 5'-end of a downstream Okazaki fragment. It enters the flap from the 5'-end and then tracks to cleave the flap base, leaving a nick for ligation. Also involved in the long patch base excision repair (LP-BER) pathway, by cleaving within the apurinic/apyrimidinic (AP) site-terminated flap. Acts as a genome stabilization factor that prevents flaps from equilibrating into structures that lead to duplications and deletions. Also possesses 5'-3' exonuclease activity on nicked or gapped double-stranded DNA, and exhibits RNase H activity. Also involved in replication and repair of rDNA and in repairing mitochondrial DNA. The chain is Flap endonuclease 1 from Phytophthora infestans (strain T30-4) (Potato late blight agent).